The sequence spans 363 residues: Spindle pole body component SPC42 (363 aa).

Residues isoleucine 62 to arginine 136 adopt a coiled-coil conformation. The disordered stretch occupies residues proline 160–aspartate 184. Positions asparagine 170–aspartate 182 are enriched in polar residues. Residues serine 213, serine 217, serine 284, and serine 329 each carry the phosphoserine modification. A coiled-coil region spans residues aspartate 248–aspartate 297. The tract at residues histidine 310 to arginine 363 is disordered. Positions serine 319–serine 329 are enriched in low complexity. Over residues asparagine 349–arginine 363 the composition is skewed to polar residues.

This sequence belongs to the SPC42 family. In terms of assembly, component of the SPC110 complex containing at least CMD1, SPC29, SPC42 and SCP110.

It localises to the nucleus. The protein localises to the cytoplasm. The protein resides in the cytoskeleton. Its subcellular location is the microtubule organizing center. It is found in the spindle pole body. Its function is as follows. Forms a polymeric layer at the periphery of the spindle pole body (SPB) central plaque which has an essential function during SPB duplication and may facilitate attachment of the SPB to the nuclear membrane. The polypeptide is Spindle pole body component SPC42 (SPC42) (Saccharomyces cerevisiae (strain RM11-1a) (Baker's yeast)).